A 345-amino-acid chain; its full sequence is Heat-inducible transcription repressor HrcA (345 aa).

This sequence belongs to the HrcA family.

Its function is as follows. Negative regulator of class I heat shock genes (grpE-dnaK-dnaJ and groELS operons). Prevents heat-shock induction of these operons. This Listeria monocytogenes serotype 1/2a (strain 10403S) protein is Heat-inducible transcription repressor HrcA.